Here is a 740-residue protein sequence, read N- to C-terminus: 1,4-alpha-glucan branching enzyme GlgB (740 aa).

Aspartate 409 functions as the Nucleophile in the catalytic mechanism. Catalysis depends on glutamate 462, which acts as the Proton donor.

The protein belongs to the glycosyl hydrolase 13 family. GlgB subfamily. As to quaternary structure, monomer.

It carries out the reaction Transfers a segment of a (1-&gt;4)-alpha-D-glucan chain to a primary hydroxy group in a similar glucan chain.. It participates in glycan biosynthesis; glycogen biosynthesis. Functionally, catalyzes the formation of the alpha-1,6-glucosidic linkages in glycogen by scission of a 1,4-alpha-linked oligosaccharide from growing alpha-1,4-glucan chains and the subsequent attachment of the oligosaccharide to the alpha-1,6 position. The polypeptide is 1,4-alpha-glucan branching enzyme GlgB (Methylococcus capsulatus (strain ATCC 33009 / NCIMB 11132 / Bath)).